Here is a 315-residue protein sequence, read N- to C-terminus: COMPASS component SWD3 (315 aa).

WD repeat units lie at residues 53 to 93, 94 to 133, 136 to 178, 187 to 228, 238 to 278, and 285 to 315; these read SHAR…HTFI, GHTA…LMKT, AHSE…KTLT, NGVV…RTFQ, HHSC…LLQL, and HHSS…WRWV.

As to quaternary structure, component of the Set1C/COMPASS complex which consists of SET1(2), BRE2(2), SPP1(2), SDC1(1), SHG1(1), SWD1(1), SWD2(1), and SWD3(1).

It localises to the nucleus. The protein localises to the chromosome. Its subcellular location is the telomere. Its function is as follows. The COMPASS (Set1C) complex specifically mono-, di- and trimethylates histone H3 to form H3K4me1/2/3, which subsequently plays a role in telomere length maintenance and transcription elongation regulation. COMPASS recognizes ubiquitinated H2B on one face of the nucleosome which stimulates the methylation of H3 on the opposing face. SWD3/CPS30 establishes COMPASS trimethylation activity and may also serve as the anchor point to properly tether and space the other subunits. This chain is COMPASS component SWD3, found in Saccharomyces cerevisiae (strain ATCC 204508 / S288c) (Baker's yeast).